A 162-amino-acid chain; its full sequence is L-amino acid N-acetyltransferase AaaT (162 aa).

The 159-residue stretch at 4–162 (IVIRHAETRD…VDAYYMARVK (159 aa)) folds into the N-acetyltransferase domain.

Belongs to the acetyltransferase family.

It carries out the reaction L-phenylalanine + acetyl-CoA = N-acetyl-L-phenylalanine + CoA + H(+). The enzyme catalyses L-methionine + acetyl-CoA = N-acetyl-L-methionine + CoA + H(+). Its function is as follows. Catalyzes the N-acetylation of L-phenylalanine and L-methionine using acetyl-CoA as acetyl donor in vitro. Cannot accept L-tyrosine as substrate and propionyl-CoA, succinyl-CoA or (S)-methylmalonyl-CoA as acyl donors. Is also able to acetylate and thus detoxify several nonhydrolyzable aminoacyl adenylates, but not the processed form of the peptide-nucleotide antibiotic microcin C (McC). When overproduced, provides complete resistance to leucyl sulfamoyl adenylate (LSA) and partial resistance to alanyl sulfamoyl adenylate (ASA) and phenylalanyl sulfamoyl adenylate (FSA). Therefore, may protect bacteria from various toxic aminoacyl nucleotides, either exogenous or those generated inside the cell during normal metabolism. The polypeptide is L-amino acid N-acetyltransferase AaaT (Escherichia coli (strain K12)).